A 580-amino-acid polypeptide reads, in one-letter code: Serine/threonine-protein kinase srk1 (580 aa).

The segment covering 51–61 has biased composition (polar residues); that stretch reads VADSTQNPTSK. Residues 51–91 are disordered; the sequence is VADSTQNPTSKPKSRHAHFHETVHENPSEYSRSKCKQPTNE. The region spanning 124–421 is the Protein kinase domain; that stretch reads YTLLQKMGDG…IHQFLAHPWI (298 aa). ATP-binding positions include 130–138 and lysine 153; that span reads MGDGAFSNV. Residue aspartate 257 is the Proton acceptor of the active site. A disordered region spans residues 530-580; it reads NLSGENDPSLASRQPAQSQQQSSQRSRNKFKGFQLNLSKATLYNRRHRQKV. Over residues 537 to 554 the composition is skewed to low complexity; that stretch reads PSLASRQPAQSQQQSSQR.

This sequence belongs to the protein kinase superfamily. CAMK Ser/Thr protein kinase family. CaMK subfamily. The cofactor is Mg(2+). Post-translationally, phosphorylated by sty1.

It localises to the cytoplasm. Its subcellular location is the nucleus. It is found in the nucleolus. The protein localises to the spore core. The enzyme catalyses L-seryl-[protein] + ATP = O-phospho-L-seryl-[protein] + ADP + H(+). It carries out the reaction L-threonyl-[protein] + ATP = O-phospho-L-threonyl-[protein] + ADP + H(+). Its function is as follows. Delays the mitotic G2/M transition by promoting nuclear exclusion of cdc25. During osmotic stress, inhibits the G2/M transition in a sty1 stress-activated MAPK pathway-dependent manner. This Schizosaccharomyces pombe (strain 972 / ATCC 24843) (Fission yeast) protein is Serine/threonine-protein kinase srk1.